A 481-amino-acid polypeptide reads, in one-letter code: MTQSTDPQGEKGLWGARFASGPATAMAALSKSTHFDFRLARYDLAGSRAHARVLHAAGLLDDDVLTALLAGLDALEADVVSGAFVPAEEDEDVHSALERALVERVGADVGGRLRAGRSRNDQIATLLRMFLRDHARVVAGLVLDVVEALLTQAAAHPGAAMPGRTHLQHAQPVLLGHHLMAHAWPLLRDVERLRDWDARAAVSPYGSGALAGSSLGLDPVAVARELGFTRSVENSIDGTASRDVAAEFAFVAAMIGVDLSRISEEVIAWATKEFSFVTLDDAWSTGSSIMPQKKNPDVAELARGKAGRLIGDLTGLLATLKGLPLAYNRDLQEDKEPVFDAVDTLEVLLPAVAGMVATLHFHTDRMASLAPQGFALATDIAEWLVRRGVPFRDAHRISGACVRRCEERAIAEGRGVELWDLTVEDLAAISPHLAPAVRDVLSTEGSLSSRDGIGGTAPVRVAEQLEAAQDALAAHLAWARP.

The protein belongs to the lyase 1 family. Argininosuccinate lyase subfamily.

The protein localises to the cytoplasm. The enzyme catalyses 2-(N(omega)-L-arginino)succinate = fumarate + L-arginine. It participates in amino-acid biosynthesis; L-arginine biosynthesis; L-arginine from L-ornithine and carbamoyl phosphate: step 3/3. The polypeptide is Argininosuccinate lyase (Kineococcus radiotolerans (strain ATCC BAA-149 / DSM 14245 / SRS30216)).